We begin with the raw amino-acid sequence, 505 residues long: Lysine--tRNA ligase (505 aa).

2 residues coordinate Mg(2+): Glu-415 and Glu-422.

Belongs to the class-II aminoacyl-tRNA synthetase family. Homodimer. Mg(2+) serves as cofactor.

Its subcellular location is the cytoplasm. The enzyme catalyses tRNA(Lys) + L-lysine + ATP = L-lysyl-tRNA(Lys) + AMP + diphosphate. This chain is Lysine--tRNA ligase (lysS), found in Salmonella typhimurium (strain LT2 / SGSC1412 / ATCC 700720).